The primary structure comprises 488 residues: Protein nucleotidyltransferase YdiU (488 aa).

ATP is bound by residues Gly91, Gly93, Arg94, Lys114, Asp126, Gly127, Arg177, and Arg184. Asp253 serves as the catalytic Proton acceptor. Asn254 and Asp263 together coordinate Mg(2+). Asp263 is a binding site for ATP.

Belongs to the SELO family. The cofactor is Mg(2+). It depends on Mn(2+) as a cofactor.

It carries out the reaction L-seryl-[protein] + ATP = 3-O-(5'-adenylyl)-L-seryl-[protein] + diphosphate. The enzyme catalyses L-threonyl-[protein] + ATP = 3-O-(5'-adenylyl)-L-threonyl-[protein] + diphosphate. It catalyses the reaction L-tyrosyl-[protein] + ATP = O-(5'-adenylyl)-L-tyrosyl-[protein] + diphosphate. The catalysed reaction is L-histidyl-[protein] + UTP = N(tele)-(5'-uridylyl)-L-histidyl-[protein] + diphosphate. It carries out the reaction L-seryl-[protein] + UTP = O-(5'-uridylyl)-L-seryl-[protein] + diphosphate. The enzyme catalyses L-tyrosyl-[protein] + UTP = O-(5'-uridylyl)-L-tyrosyl-[protein] + diphosphate. Functionally, nucleotidyltransferase involved in the post-translational modification of proteins. It can catalyze the addition of adenosine monophosphate (AMP) or uridine monophosphate (UMP) to a protein, resulting in modifications known as AMPylation and UMPylation. The polypeptide is Protein nucleotidyltransferase YdiU (Bacillus cereus (strain G9842)).